We begin with the raw amino-acid sequence, 485 residues long: UDP-N-acetylmuramate--L-alanine ligase (485 aa).

120 to 126 (GSHGKTT) lines the ATP pocket.

It belongs to the MurCDEF family.

The protein localises to the cytoplasm. It carries out the reaction UDP-N-acetyl-alpha-D-muramate + L-alanine + ATP = UDP-N-acetyl-alpha-D-muramoyl-L-alanine + ADP + phosphate + H(+). The protein operates within cell wall biogenesis; peptidoglycan biosynthesis. Cell wall formation. The sequence is that of UDP-N-acetylmuramate--L-alanine ligase from Rickettsia rickettsii (strain Iowa).